The following is a 211-amino-acid chain: MPTHEIRHPLVRHKIGLMRRAEISTKSFRELAQEVGALLTYEASKDFNLGTEVVQGWAGPVEVEKLKGKKVTVVPILRAGLGMLDGVLSLIPAAKVSVVGQVRNEETLEAKTYLEKLVGELDQRLALIIDPMLATGGSMISTIDLLKKAGCSEIRALVLVAAPEGIAAVEKAHPDVHIYTAAIDERLNEKGYILPGLGDAGDRIFGTKQKS.

5-phospho-alpha-D-ribose 1-diphosphate is bound by residues R78, R103, and 130-138; that span reads DPMLATGGS. Uracil-binding positions include I193 and 198-200; that span reads GDA. 5-phospho-alpha-D-ribose 1-diphosphate is bound at residue D199.

This sequence belongs to the UPRTase family. Requires Mg(2+) as cofactor.

The catalysed reaction is UMP + diphosphate = 5-phospho-alpha-D-ribose 1-diphosphate + uracil. It functions in the pathway pyrimidine metabolism; UMP biosynthesis via salvage pathway; UMP from uracil: step 1/1. With respect to regulation, allosterically activated by GTP. Catalyzes the conversion of uracil and 5-phospho-alpha-D-ribose 1-diphosphate (PRPP) to UMP and diphosphate. This chain is Uracil phosphoribosyltransferase, found in Hahella chejuensis (strain KCTC 2396).